We begin with the raw amino-acid sequence, 243 residues long: Uridylate kinase (243 aa).

18-21 (KLGG) contributes to the ATP binding site. G59 lines the UMP pocket. Positions 60 and 64 each coordinate ATP. Residues D79 and 140–147 (MGMPYFST) contribute to the UMP site. ATP contacts are provided by Y173 and D176.

This sequence belongs to the UMP kinase family. Homohexamer.

The protein localises to the cytoplasm. The catalysed reaction is UMP + ATP = UDP + ADP. It functions in the pathway pyrimidine metabolism; CTP biosynthesis via de novo pathway; UDP from UMP (UMPK route): step 1/1. With respect to regulation, inhibited by UTP. In terms of biological role, catalyzes the reversible phosphorylation of UMP to UDP. The chain is Uridylate kinase from Corynebacterium glutamicum (strain R).